A 478-amino-acid chain; its full sequence is Zinc metalloproteinase/disintegrin (478 aa).

Residues 1-20 form the signal peptide; that stretch reads MIQVLLVTICLAVFPYQGSS. A propeptide spanning residues 21–194 is cleaved from the precursor; that stretch reads KTLKSGNVND…KASQLNLTPE (174 aa). Gln195 bears the Pyrrolidone carboxylic acid mark. One can recognise a Peptidase M12B domain in the interval 201 to 397; the sequence is RYIELVIVAD…RNPQCILNQP (197 aa). Residues Glu204 and Asp288 each coordinate Ca(2+). 3 disulfides stabilise this stretch: Cys312/Cys392, Cys352/Cys376, and Cys354/Cys359. His337 lines the Zn(2+) pocket. The active site involves Glu338. 2 residues coordinate Zn(2+): His341 and His347. Residues Cys392 and Asn395 each contribute to the Ca(2+) site. A propeptide spanning residues 398–413 is cleaved from the precursor; that stretch reads LRTDTVSTPVSGNELL. The Disintegrin domain maps to 405-478; that stretch reads TPVSGNELLQ…SDCPRNPYKD (74 aa). Intrachain disulfides connect Cys420-Cys443, Cys434-Cys440, Cys439-Cys464, and Cys452-Cys471. Positions 456 to 458 match the Cell attachment site; atypical (VGD) motif; it reads VGD.

Belongs to the venom metalloproteinase (M12B) family. P-II subfamily. P-IIe sub-subfamily. Monomer (metalloproteinase). Heterodimer; disulfide-linked (disintegrin). It depends on Zn(2+) as a cofactor. As to expression, expressed by the venom gland.

The protein localises to the secreted. Fibrinolytic and caseinolytic activities are inhibited by Cd(2+), Cu(2+) and Co(2+) ions. Not inhibited by Mg(2+), Ca(2+) and Ba(2+). Also inhibited by EDTA, EGTA and 1,10-phenanthroline. Fibrinolytic and fibrinogenolytic metalloproteinase that hydrolyzes the Aalpha-chain and more slowly the Bbeta-chain of fibrin and fibrinogen. Its fibrinolytic activity is direct, without any plasminogen activation. Also hydrolyzes casein and B-chain of oxidized insulin. Inhibits ADP-induced and collagen-induced platelet aggregation. Shows low hemorrhagic activity. Cleaves the plasma proteinase inhibitors alpha(2)-macroglobulin (A2M) and pregnancy zone protein (PZP), and is inhibited by them. The metalloprotease has no strict P1-P1' specificity requirement. Hydrolysis at sites with a Pro residue at P1 is observed with bradykinin, substance P, PZP and alpha chain fibrinogen (FGA). Functionally, poor inhibitor of platelet aggregation. The disintegrin inhibits the adhesion of the alpha-4/beta-1 (ITGA4/ITGB1) integrin to VCAM-1. Inhibition on alpha-2b/beta-3 (ITGA2B/ITGB3) is low. The protein is Zinc metalloproteinase/disintegrin of Macrovipera lebetinus (Levantine viper).